A 154-amino-acid polypeptide reads, in one-letter code: 6,7-dimethyl-8-ribityllumazine synthase (154 aa).

Residues F22, 56-58, and 80-82 each bind 5-amino-6-(D-ribitylamino)uracil; these read AFE and AVI. Position 85-86 (85-86) interacts with (2S)-2-hydroxy-3-oxobutyl phosphate; that stretch reads AT. H88 functions as the Proton donor in the catalytic mechanism. F113 is a 5-amino-6-(D-ribitylamino)uracil binding site. R127 lines the (2S)-2-hydroxy-3-oxobutyl phosphate pocket.

It belongs to the DMRL synthase family.

The catalysed reaction is (2S)-2-hydroxy-3-oxobutyl phosphate + 5-amino-6-(D-ribitylamino)uracil = 6,7-dimethyl-8-(1-D-ribityl)lumazine + phosphate + 2 H2O + H(+). The protein operates within cofactor biosynthesis; riboflavin biosynthesis; riboflavin from 2-hydroxy-3-oxobutyl phosphate and 5-amino-6-(D-ribitylamino)uracil: step 1/2. In terms of biological role, catalyzes the formation of 6,7-dimethyl-8-ribityllumazine by condensation of 5-amino-6-(D-ribitylamino)uracil with 3,4-dihydroxy-2-butanone 4-phosphate. This is the penultimate step in the biosynthesis of riboflavin. The sequence is that of 6,7-dimethyl-8-ribityllumazine synthase from Syntrophobacter fumaroxidans (strain DSM 10017 / MPOB).